Here is a 3970-residue protein sequence, read N- to C-terminus: Polyketide synthase-nonribosomal peptide synthetase hybrid himA (3970 aa).

The Ketosynthase family 3 (KS3) domain maps to 8 to 443; that stretch reads SEPIAIIGSA…GTNSHAILES (436 aa). Active-site for beta-ketoacyl synthase activity residues include Cys181, His320, and His363. Positions 561-876 are malonyl-CoA:ACP transacylase (MAT) domain; that stretch reads IFTGQGAQWP…PYAGLLHRGR (316 aa). The interval 949-1083 is N-terminal hotdog fold; that stretch reads HELLGVRTSD…GMVHLHLGEP (135 aa). The interval 949-1253 is dehydratase (DH) domain; sequence HELLGVRTSD…GLTVVALSST (305 aa). A PKS/mFAS DH domain is found at 949 to 1256; sequence HELLGVRTSD…VVALSSTGPA (308 aa). His981 (proton acceptor; for dehydratase activity) is an active-site residue. The tract at residues 1098-1256 is C-terminal hotdog fold; it reads GLNRVDLDEF…VVALSSTGPA (159 aa). Residue Asp1158 is the Proton donor; for dehydratase activity of the active site. A ketoreductase (KR) domain region spans residues 2060 to 2234; sequence TYVMIGLTGE…ASVLDIGMVS (175 aa). One can recognise a Carrier 1 domain in the interval 2342-2419; sequence AIAAILTESF…TLAEEVAKEL (78 aa). Ser2379 carries the post-translational modification O-(pantetheine 4'-phosphoryl)serine. The segment at 2420 to 2482 is disordered; sequence FEDRSTSAPP…NDDSDPTAQC (63 aa). The segment covering 2445 to 2466 has biased composition (low complexity); the sequence is GSSTDPSSNSDSKSGFDGFSSD. Acidic residues predominate over residues 2467 to 2477; it reads DSSDIANDDSD. Positions 2487-2919 are condensation (C) domain; the sequence is PMSLSQARMW…ATTPTERVAT (433 aa). The tract at residues 2974-3381 is adenylation (A) domain; sequence SYKAMSDRVN…LGDIANAILK (408 aa). The interval 3466-3495 is disordered; that stretch reads RPLPASGDEDGDEDTETETGADADADAGAD. Residues 3472–3492 are compositionally biased toward acidic residues; it reads GDEDGDEDTETETGADADADA. The region spanning 3496–3574 is the Carrier 2 domain; the sequence is TTLSDIHSKL…AIAERILRGV (79 aa). An O-(pantetheine 4'-phosphoryl)serine modification is found at Ser3534. The tract at residues 3633–3866 is reductase (R) domain; sequence LTGATGFLGR…FIRVETVAEE (234 aa).

In the C-terminal section; belongs to the NRP synthetase family.

The protein operates within secondary metabolite biosynthesis. Polyketide synthase-nonribosomal peptide synthetase hybrid; part of the him gene cluster that mediates the biosynthesis of himeic acid A, a ubiquitin-activating enzyme (E1) inhibitor. First, himA, together with the trans-enoyl reductase himH, catalyzes the formation of apolyketide chain, which is then condensed with leucine by the NRPS activity of himA. Dieckmann cyclization and release from himA gives a tetramic acid intermediate as the product of himA PKS-NRPS. HimG then catalyzes alpha-oxidation of the tetramic acid ring, with a subsequent rearrangement to yield apyrone intermediate. Two terminal methyl groups of polyketide and amide side chains are oxidized to carboxylic acids by himC cytochrome P450 monooxygenase to form himeic acid A. Himeic acid A is further converted to himeic acids B and C during culture growth. No gene responsible for pyrone to pyridone conversion was found in the him gene cluster and himeic acid A is non-enzymatically converted to himeic acid C by the incorporation of an ammonium nitrogen atom in a pH5 buffer, and to himeic acid B at a conversion ratio of 50% during incubation in MeOH for 5 days. This chain is Polyketide synthase-nonribosomal peptide synthetase hybrid himA, found in Aspergillus japonicus.